A 475-amino-acid chain; its full sequence is Ribulose bisphosphate carboxylase large chain (475 aa).

Residues 1–2 (MS) constitute a propeptide that is removed on maturation. P3 bears the N-acetylproline mark. K14 carries the N6,N6,N6-trimethyllysine modification. Substrate-binding residues include N123 and T173. K175 serves as the catalytic Proton acceptor. K177 is a substrate binding site. Residues K201, D203, and E204 each contribute to the Mg(2+) site. Residue K201 is modified to N6-carboxylysine. H294 acts as the Proton acceptor in catalysis. Substrate is bound by residues R295, H327, and S379.

It belongs to the RuBisCO large chain family. Type I subfamily. In terms of assembly, heterohexadecamer of 8 large chains and 8 small chains; disulfide-linked. The disulfide link is formed within the large subunit homodimers. Mg(2+) serves as cofactor. The disulfide bond which can form in the large chain dimeric partners within the hexadecamer appears to be associated with oxidative stress and protein turnover.

Its subcellular location is the plastid. The protein localises to the chloroplast. The catalysed reaction is 2 (2R)-3-phosphoglycerate + 2 H(+) = D-ribulose 1,5-bisphosphate + CO2 + H2O. It carries out the reaction D-ribulose 1,5-bisphosphate + O2 = 2-phosphoglycolate + (2R)-3-phosphoglycerate + 2 H(+). Functionally, ruBisCO catalyzes two reactions: the carboxylation of D-ribulose 1,5-bisphosphate, the primary event in carbon dioxide fixation, as well as the oxidative fragmentation of the pentose substrate in the photorespiration process. Both reactions occur simultaneously and in competition at the same active site. The protein is Ribulose bisphosphate carboxylase large chain (rbcL) of Cucumis sativus (Cucumber).